The primary structure comprises 134 residues: ATP synthase epsilon chain (134 aa).

The protein belongs to the ATPase epsilon chain family. As to quaternary structure, F-type ATPases have 2 components, CF(1) - the catalytic core - and CF(0) - the membrane proton channel. CF(1) has five subunits: alpha(3), beta(3), gamma(1), delta(1), epsilon(1). CF(0) has three main subunits: a, b and c.

The protein localises to the cell membrane. In terms of biological role, produces ATP from ADP in the presence of a proton gradient across the membrane. The polypeptide is ATP synthase epsilon chain (Anoxybacillus flavithermus (strain DSM 21510 / WK1)).